Consider the following 703-residue polypeptide: Polyribonucleotide nucleotidyltransferase (703 aa).

The Mg(2+) site is built by aspartate 489 and aspartate 495. The region spanning 556–615 (PTMIAMKIDTDKIRDVIGKGGATIRAICEETKASIDIEDDGSIKIFGETKEAAEAARQRV) is the KH domain. Residues 625–693 (GKIYVGKVER…NRGRIKLSIK (69 aa)) form the S1 motif domain.

Belongs to the polyribonucleotide nucleotidyltransferase family. Component of the RNA degradosome, which is a multiprotein complex involved in RNA processing and mRNA degradation. Requires Mg(2+) as cofactor.

The protein resides in the cytoplasm. It carries out the reaction RNA(n+1) + phosphate = RNA(n) + a ribonucleoside 5'-diphosphate. Involved in mRNA degradation. Catalyzes the phosphorolysis of single-stranded polyribonucleotides processively in the 3'- to 5'-direction. The sequence is that of Polyribonucleotide nucleotidyltransferase from Pseudomonas fluorescens (strain ATCC BAA-477 / NRRL B-23932 / Pf-5).